The primary structure comprises 569 residues: 2-succinyl-5-enolpyruvyl-6-hydroxy-3-cyclohexene-1-carboxylate synthase (569 aa).

This sequence belongs to the TPP enzyme family. MenD subfamily. In terms of assembly, homodimer. Mg(2+) is required as a cofactor. It depends on Mn(2+) as a cofactor. Requires thiamine diphosphate as cofactor.

The enzyme catalyses isochorismate + 2-oxoglutarate + H(+) = 5-enolpyruvoyl-6-hydroxy-2-succinyl-cyclohex-3-ene-1-carboxylate + CO2. It functions in the pathway quinol/quinone metabolism; 1,4-dihydroxy-2-naphthoate biosynthesis; 1,4-dihydroxy-2-naphthoate from chorismate: step 2/7. Its pathway is quinol/quinone metabolism; menaquinone biosynthesis. Catalyzes the thiamine diphosphate-dependent decarboxylation of 2-oxoglutarate and the subsequent addition of the resulting succinic semialdehyde-thiamine pyrophosphate anion to isochorismate to yield 2-succinyl-5-enolpyruvyl-6-hydroxy-3-cyclohexene-1-carboxylate (SEPHCHC). This chain is 2-succinyl-5-enolpyruvyl-6-hydroxy-3-cyclohexene-1-carboxylate synthase, found in Shewanella sediminis (strain HAW-EB3).